We begin with the raw amino-acid sequence, 444 residues long: Transcription activator AKTR-3 (444 aa).

Residues 16–43 (CDFCTQSKLRCNKNKPSCRRCTIQQQPC) constitute a DNA-binding region (zn(2)-C6 fungal-type). The disordered stretch occupies residues 49–89 (RRTGRPPKHPRTANDCQEANGQHGEQDPVTSTPGGSCQQQS). Over residues 50-59 (RTGRPPKHPR) the composition is skewed to basic residues. The segment covering 76–89 (PVTSTPGGSCQQQS) has biased composition (polar residues).

The protein localises to the nucleus. Functionally, transcription factor that regulates the expression of the gene clusters that mediate the biosynthesis of the host-selective toxins (HSTs) AK-toxins responsible for Japanese pear black spot disease by the Japanese pear pathotype. AK-toxins are esters of 9,10-epoxy 8-hydroxy 9-methyldecatrienoic acid (EDA). On cellular level, AK-toxins affect plasma membrane of susceptible cells and cause a sudden increase in loss of K(+) after a few minutes of toxin treatment. This is Transcription activator AKTR-3 from Alternaria alternata (Alternaria rot fungus).